Here is a 101-residue protein sequence, read N- to C-terminus: MAQKIRIKLKSYDYNLIDKSAEKIVQAVKNTKAVVSGPIPLPSKKEVYTVLRSPHVYKESREQFQLSTYKRLIDIYSNSSKTIDALMKLELPSGVEVSIKA.

Belongs to the universal ribosomal protein uS10 family. In terms of assembly, part of the 30S ribosomal subunit.

Its function is as follows. Involved in the binding of tRNA to the ribosomes. The protein is Small ribosomal subunit protein uS10 of Amoebophilus asiaticus (strain 5a2).